Reading from the N-terminus, the 271-residue chain is MNIMSEAAVEKALDQKMNTVPYKMIGNDVSVYYGEKRALFDVNLNIRENTVTALIGPSGCGKSTFLRTLNRMNDTIENCRVTGKITLDEDDIYDPSIDVVELRARVGMVFQKPNPFPKSIYDNVSYGPRIHGLARTKAELDEVVETSLQKAGLWNEVKDRLQEPGTGLSGGQQQRLCIARAVAVSPEVILMDEPCSALDPIATAKVEELIHELRANFTIVIVTHSMQQAARVSQRTAMFHLGNLVEENDTDKMFTNPDDQRTQDYIMGRFG.

The region spanning 24-266 is the ABC transporter domain; that stretch reads MIGNDVSVYY…PDDQRTQDYI (243 aa). 56–63 contacts ATP; the sequence is GPSGCGKS.

The protein belongs to the ABC transporter superfamily. Phosphate importer (TC 3.A.1.7) family. As to quaternary structure, the complex is composed of two ATP-binding proteins (PstB), two transmembrane proteins (PstC and PstA) and a solute-binding protein (PstS).

Its subcellular location is the cell inner membrane. It catalyses the reaction phosphate(out) + ATP + H2O = ADP + 2 phosphate(in) + H(+). In terms of biological role, part of the ABC transporter complex PstSACB involved in phosphate import. Responsible for energy coupling to the transport system. The sequence is that of Phosphate import ATP-binding protein PstB from Rhizobium meliloti (strain 1021) (Ensifer meliloti).